The following is a 391-amino-acid chain: Fructose-bisphosphate aldolase 3, chloroplastic (391 aa).

Residues 1–40 constitute a chloroplast transit peptide; it reads MASASFVKPNTLSSPWIGQRSFAHTSASSSPPPRVSFAIR. Residue R88 coordinates substrate. S150 carries the phosphoserine modification. K178 lines the substrate pocket. S208 is subject to Phosphoserine. Catalysis depends on E218, which acts as the Proton acceptor. Catalysis depends on K260, which acts as the Schiff-base intermediate with dihydroxyacetone-P. A substrate-binding site is contributed by 302 to 304; it reads SGG. The residue at position 387 (K387) is an N6,N6,N6-trimethyllysine.

The protein belongs to the class I fructose-bisphosphate aldolase family. As to quaternary structure, homotetramer. In terms of processing, can be trimethylated at Lys-387 by LSMT-L, but the trimethylation has no effect in vitro. S-glutathionylated. As to expression, expressed in roots, and at low levels in rosettes leaves, cauline leaves, stems and flowers.

The protein localises to the plastid. The protein resides in the chloroplast. Its subcellular location is the plastoglobule. The catalysed reaction is beta-D-fructose 1,6-bisphosphate = D-glyceraldehyde 3-phosphate + dihydroxyacetone phosphate. Its pathway is carbohydrate degradation; glycolysis; D-glyceraldehyde 3-phosphate and glycerone phosphate from D-glucose: step 4/4. Plays a key role in glycolysis and gluconeogenesis. This Arabidopsis thaliana (Mouse-ear cress) protein is Fructose-bisphosphate aldolase 3, chloroplastic.